Consider the following 612-residue polypeptide: Anaerobic magnesium-protoporphyrin IX monomethyl ester cyclase (612 aa).

Positions 9-143 (NYHSGGAEIA…KAYEADNFAE (135 aa)) constitute a B12-binding domain. Residues 190-417 (PLGVRVAIPN…MKPKALTRGE (228 aa)) enclose the Radical SAM core domain. [4Fe-4S] cluster-binding residues include cysteine 204, cysteine 208, and cysteine 211.

The protein belongs to the BchE family. The cofactor is [4Fe-4S] cluster. Adenosylcob(III)alamin serves as cofactor.

The enzyme catalyses Mg-protoporphyrin IX 13-monomethyl ester + 3 S-adenosyl-L-methionine + H2O = 3,8-divinyl protochlorophyllide a + 3 5'-deoxyadenosine + 3 L-methionine + 4 H(+). Its pathway is porphyrin-containing compound metabolism; bacteriochlorophyll biosynthesis (light-independent). Functionally, involved in the tetrapyrrole biosynthetic pathways leading to chlorophyll and bacteriochlorophyll (BChl). Catalyzes the anaerobic formation of the isocyclic ring (E-ring) in Mg-protoporphyrin monomethyl ester (MPE) to yield protochlorophyllide a (PChlide a) via a six-electron oxidation and the formation of an oxo group at position C13 using oxygen from a water molecule. This chain is Anaerobic magnesium-protoporphyrin IX monomethyl ester cyclase, found in Cereibacter sphaeroides (strain ATCC 17023 / DSM 158 / JCM 6121 / CCUG 31486 / LMG 2827 / NBRC 12203 / NCIMB 8253 / ATH 2.4.1.) (Rhodobacter sphaeroides).